Consider the following 402-residue polypeptide: MRHTWRWFGPVDKVTVQDAAQAGAEGIVSALHHITTGDVWPVDEITKRHEAIKAGGLYWDVVESVPVSEDIKTQTGDWKNHIANWQETLRRLSASGIRTVCYNFMPVLDWTRTDLRWETRHGARAMRFDLTDFAAFDIHILKRPDAKADYPDWLLEEAAKRFAEMPDTKIAALGRNIGAGLPGSADGYTLAQLLEKLRSYHGINRGRLQQNLIDFLSEVTPVAEEVGINICAHGDDPPWPLLGLPRILSTEADYAHMLSQVDSRANGVTLCTGSLGARADNDLPFIAGRFADRIHFVHLRNVTRDTDTVPCSFFEDEHLEGGTDMVAVIAALITEEARRRAEGRDDHTIPMRPDHGQEILDDLTRGAQPGYPAIGRLKGLAELRGIERTLSHGRFGLATGKG.

The protein belongs to the mannonate dehydratase family. The cofactor is Fe(2+). It depends on Mn(2+) as a cofactor.

It catalyses the reaction D-mannonate = 2-dehydro-3-deoxy-D-gluconate + H2O. Its pathway is carbohydrate metabolism; pentose and glucuronate interconversion. In terms of biological role, catalyzes the dehydration of D-mannonate. In Agrobacterium fabrum (strain C58 / ATCC 33970) (Agrobacterium tumefaciens (strain C58)), this protein is Mannonate dehydratase 1 (uxuA1).